The following is a 426-amino-acid chain: Deoxyguanosinetriphosphate triphosphohydrolase-like protein (426 aa).

The segment at 1–23 is disordered; that stretch reads MYPYSESDAQRLHQEAPKASQLA. The HD domain maps to 67 to 217; the sequence is RLTHSLEVAQ…MDFSDDIAYS (151 aa).

This sequence belongs to the dGTPase family. Type 2 subfamily.

In Corynebacterium efficiens (strain DSM 44549 / YS-314 / AJ 12310 / JCM 11189 / NBRC 100395), this protein is Deoxyguanosinetriphosphate triphosphohydrolase-like protein.